The primary structure comprises 196 residues: ATP-dependent Clp protease proteolytic subunit (196 aa).

Serine 101 serves as the catalytic Nucleophile. Histidine 126 is a catalytic residue.

The protein belongs to the peptidase S14 family. As to quaternary structure, component of the chloroplastic Clp protease core complex.

The protein resides in the plastid. Its subcellular location is the chloroplast stroma. The catalysed reaction is Hydrolysis of proteins to small peptides in the presence of ATP and magnesium. alpha-casein is the usual test substrate. In the absence of ATP, only oligopeptides shorter than five residues are hydrolyzed (such as succinyl-Leu-Tyr-|-NHMec, and Leu-Tyr-Leu-|-Tyr-Trp, in which cleavage of the -Tyr-|-Leu- and -Tyr-|-Trp bonds also occurs).. Cleaves peptides in various proteins in a process that requires ATP hydrolysis. Has a chymotrypsin-like activity. Plays a major role in the degradation of misfolded proteins. This is ATP-dependent Clp protease proteolytic subunit from Lotus japonicus (Lotus corniculatus var. japonicus).